Consider the following 107-residue polypeptide: Phosphoribosyl-ATP pyrophosphatase (107 aa).

This sequence belongs to the PRA-PH family.

It localises to the cytoplasm. The enzyme catalyses 1-(5-phospho-beta-D-ribosyl)-ATP + H2O = 1-(5-phospho-beta-D-ribosyl)-5'-AMP + diphosphate + H(+). It participates in amino-acid biosynthesis; L-histidine biosynthesis; L-histidine from 5-phospho-alpha-D-ribose 1-diphosphate: step 2/9. In Bacillus cereus (strain AH187), this protein is Phosphoribosyl-ATP pyrophosphatase.